The primary structure comprises 361 residues: Chorismate synthase (361 aa).

The NADP(+) site is built by Arg48 and Arg54. Residues 125–127 (RSS), 238–239 (NA), Gly278, 293–297 (KPTSS), and Arg319 contribute to the FMN site.

This sequence belongs to the chorismate synthase family. In terms of assembly, homotetramer. FMNH2 is required as a cofactor.

It carries out the reaction 5-O-(1-carboxyvinyl)-3-phosphoshikimate = chorismate + phosphate. Its pathway is metabolic intermediate biosynthesis; chorismate biosynthesis; chorismate from D-erythrose 4-phosphate and phosphoenolpyruvate: step 7/7. In terms of biological role, catalyzes the anti-1,4-elimination of the C-3 phosphate and the C-6 proR hydrogen from 5-enolpyruvylshikimate-3-phosphate (EPSP) to yield chorismate, which is the branch point compound that serves as the starting substrate for the three terminal pathways of aromatic amino acid biosynthesis. This reaction introduces a second double bond into the aromatic ring system. This chain is Chorismate synthase, found in Escherichia coli (strain K12 / MC4100 / BW2952).